Consider the following 183-residue polypeptide: Large ribosomal subunit protein bL32m (183 aa).

Zn(2+) is bound by residues Cys-99, Cys-102, Cys-112, and Cys-115.

The protein belongs to the bacterial ribosomal protein bL32 family. As to quaternary structure, component of the mitochondrial large ribosomal subunit (mt-LSU).

Its subcellular location is the mitochondrion. Its function is as follows. Component of the mitochondrial large ribosomal subunit (mt-LSU). The mitochondrial ribosome (mitoribosome) is a large ribonucleoprotein complex responsible for the synthesis of proteins inside mitochondria. The polypeptide is Large ribosomal subunit protein bL32m (mrpl-32) (Caenorhabditis elegans).